A 334-amino-acid polypeptide reads, in one-letter code: Ornithine carbamoyltransferase, catabolic (334 aa).

Carbamoyl phosphate is bound by residues 57-60 (STRT), Q84, R108, and 135-138 (HPTQ). L-ornithine contacts are provided by residues N168, D232, and 236–237 (SM). Carbamoyl phosphate is bound by residues 274 to 275 (CL) and R320.

It belongs to the aspartate/ornithine carbamoyltransferase superfamily. OTCase family.

The protein resides in the cytoplasm. The enzyme catalyses carbamoyl phosphate + L-ornithine = L-citrulline + phosphate + H(+). It participates in amino-acid degradation; L-arginine degradation via ADI pathway; carbamoyl phosphate from L-arginine: step 2/2. Functionally, reversibly catalyzes the transfer of the carbamoyl group from carbamoyl phosphate (CP) to the N(epsilon) atom of ornithine (ORN) to produce L-citrulline. The polypeptide is Ornithine carbamoyltransferase, catabolic (arcB) (Rhizobium meliloti (strain 1021) (Ensifer meliloti)).